Consider the following 129-residue polypeptide: Small ribosomal subunit protein uS11 (129 aa).

The protein belongs to the universal ribosomal protein uS11 family. In terms of assembly, part of the 30S ribosomal subunit. Interacts with proteins S7 and S18. Binds to IF-3.

Its function is as follows. Located on the platform of the 30S subunit, it bridges several disparate RNA helices of the 16S rRNA. Forms part of the Shine-Dalgarno cleft in the 70S ribosome. This is Small ribosomal subunit protein uS11 from Geobacillus kaustophilus (strain HTA426).